The chain runs to 284 residues: GTP cyclohydrolase MptA (284 aa).

This sequence belongs to the GTP cyclohydrolase IV family. In terms of assembly, homodimer. Fe(2+) serves as cofactor.

The enzyme catalyses GTP + H2O = 7,8-dihydroneopterin 2',3'-cyclic phosphate + formate + diphosphate + H(+). It participates in cofactor biosynthesis; 5,6,7,8-tetrahydromethanopterin biosynthesis. Converts GTP to 7,8-dihydro-D-neopterin 2',3'-cyclic phosphate, the first intermediate in the biosynthesis of coenzyme methanopterin. The polypeptide is GTP cyclohydrolase MptA (Thermoplasma volcanium (strain ATCC 51530 / DSM 4299 / JCM 9571 / NBRC 15438 / GSS1)).